Reading from the N-terminus, the 497-residue chain is tRNA (adenine(58)-N(1))-methyltransferase non-catalytic subunit TRM6 (497 aa).

A disordered region spans residues 69-102 (TNGGSLQPKKKKEEPTSETKEAGTDNRNIIDDGK). Residues 79-102 (KKEEPTSETKEAGTDNRNIIDDGK) show a composition bias toward basic and acidic residues. The interval 94 to 104 (NRNIIDDGKSQ) is substrate. Position 107 is a phosphothreonine (Thr-107). Substrate stretches follow at residues 145–154 (KYIKKKKKKY) and 175–182 (REPGKINH). The tract at residues 276–354 (SSEPKDIASV…EKQRRQEEQK (79 aa)) is disordered. 2 positions are modified to phosphoserine: Ser-298 and Ser-305. A compositionally biased stretch (basic and acidic residues) spans 311–354 (ESNHPEEQERMEIVSQDPDYKEPKESGSKKDYIQEKQRRQEEQK). Substrate-binding residues include Arg-349 and Arg-377. Substrate regions lie at residues 415–423 (RERGGVINL) and 434–441 (QVLPDRSH). The interval 468–497 (PSLKSSTSTLESHKTEEPAAKKRKCPESDS) is disordered. Positions 478–497 (ESHKTEEPAAKKRKCPESDS) are enriched in basic and acidic residues.

The protein belongs to the TRM6/GCD10 family. As to quaternary structure, heterotetramer; composed of two copies of TRMT6 and two copies of TRMT61A.

The protein resides in the nucleus. Substrate-binding subunit of tRNA (adenine-N(1)-)-methyltransferase, which catalyzes the formation of N(1)-methyladenine at position 58 (m1A58) in initiator methionyl-tRNA. Together with the TRMT61A catalytic subunit, part of a mRNA N(1)-methyltransferase complex that mediates methylation of adenosine residues at the N(1) position of a small subset of mRNAs: N(1) methylation takes place in tRNA T-loop-like structures of mRNAs and is only present at low stoichiometries. The chain is tRNA (adenine(58)-N(1))-methyltransferase non-catalytic subunit TRM6 (TRMT6) from Bos taurus (Bovine).